Reading from the N-terminus, the 316-residue chain is Biotin synthase (316 aa).

In terms of domain architecture, Radical SAM core spans 36–264 (FDNRITLCAI…TATLRICGGR (229 aa)). Residues C53, C57, and C60 each contribute to the [4Fe-4S] cluster site. [2Fe-2S] cluster is bound by residues C129, C189, and R259.

Belongs to the radical SAM superfamily. Biotin synthase family. In terms of assembly, homodimer. It depends on [4Fe-4S] cluster as a cofactor. [2Fe-2S] cluster serves as cofactor.

It carries out the reaction (4R,5S)-dethiobiotin + (sulfur carrier)-SH + 2 reduced [2Fe-2S]-[ferredoxin] + 2 S-adenosyl-L-methionine = (sulfur carrier)-H + biotin + 2 5'-deoxyadenosine + 2 L-methionine + 2 oxidized [2Fe-2S]-[ferredoxin]. It functions in the pathway cofactor biosynthesis; biotin biosynthesis; biotin from 7,8-diaminononanoate: step 2/2. Functionally, catalyzes the conversion of dethiobiotin (DTB) to biotin by the insertion of a sulfur atom into dethiobiotin via a radical-based mechanism. The chain is Biotin synthase from Desulfovibrio desulfuricans (strain ATCC 27774 / DSM 6949 / MB).